The sequence spans 233 residues: MIDSIRSSRALIDVRRLGTVDYRAAWQQQRDLADARVAGGPDTLLLLQHPAVYTAGRRTEPHERPLDGTPVVDTDRGGKITWHGPGQLVGYPIIGLAEPLDVVDYVRRLEEALIKVCADLGLDTVRVPGRSGVWVPGDAGRPDRKVAAIGVRVSRATTLHGFALNCDCDLGAFSAIVPCGISDAGVTSLTAELRRPVAVDDVVTSVADLVCDALDGVLPVREHSPGARVASAM.

In terms of domain architecture, BPL/LPL catalytic spans 38–218 (AGGPDTLLLL…LVCDALDGVL (181 aa)). The span at 57–66 (RRTEPHERPL) shows a compositional bias: basic and acidic residues. A disordered region spans residues 57–77 (RRTEPHERPLDGTPVVDTDRG). Residues 76–83 (RGGKITWH), 148–150 (AIG), and 161–163 (GFA) each bind substrate. Catalysis depends on Cys179, which acts as the Acyl-thioester intermediate.

It belongs to the LipB family.

It is found in the cytoplasm. The catalysed reaction is octanoyl-[ACP] + L-lysyl-[protein] = N(6)-octanoyl-L-lysyl-[protein] + holo-[ACP] + H(+). It participates in protein modification; protein lipoylation via endogenous pathway; protein N(6)-(lipoyl)lysine from octanoyl-[acyl-carrier-protein]: step 1/2. In terms of biological role, catalyzes the transfer of endogenously produced octanoic acid from octanoyl-acyl-carrier-protein onto the lipoyl domains of lipoate-dependent enzymes. Lipoyl-ACP can also act as a substrate although octanoyl-ACP is likely to be the physiological substrate. This Mycobacterium avium (strain 104) protein is Octanoyltransferase.